A 288-amino-acid polypeptide reads, in one-letter code: Hypersensitive-induced response protein-like protein 1 (288 aa).

A lipid anchor (N-myristoyl glycine) is attached at Gly2.

Positive regulator of hypersensitive response (HR)-like cell death. May be involved in potassium ion channel regulation. This chain is Hypersensitive-induced response protein-like protein 1, found in Oryza sativa subsp. japonica (Rice).